A 302-amino-acid chain; its full sequence is tRNA pseudouridine synthase B (302 aa).

Residue Asp47 is the Nucleophile of the active site.

The protein belongs to the pseudouridine synthase TruB family. Type 1 subfamily.

The enzyme catalyses uridine(55) in tRNA = pseudouridine(55) in tRNA. Responsible for synthesis of pseudouridine from uracil-55 in the psi GC loop of transfer RNAs. This Ruegeria sp. (strain TM1040) (Silicibacter sp.) protein is tRNA pseudouridine synthase B.